The chain runs to 226 residues: Urease accessory protein UreF (226 aa).

The protein belongs to the UreF family. In terms of assembly, ureD, UreF and UreG form a complex that acts as a GTP-hydrolysis-dependent molecular chaperone, activating the urease apoprotein by helping to assemble the nickel containing metallocenter of UreC. The UreE protein probably delivers the nickel.

The protein localises to the cytoplasm. Its function is as follows. Required for maturation of urease via the functional incorporation of the urease nickel metallocenter. In Burkholderia multivorans (strain ATCC 17616 / 249), this protein is Urease accessory protein UreF.